A 213-amino-acid polypeptide reads, in one-letter code: Ubiquitin-conjugating enzyme E2 S (213 aa).

Residues 13–159 form the UBC core domain; it reads QIIRQVAKEV…ARMMTEIHAK (147 aa). The active-site Glycyl thioester intermediate is the Cys-97. The interval 157–213 is disordered; sequence HAKPTTKTAPTKNEETNCPSTSGTQSTSEGPMAKKHAGDKNAAEKKKKEKKRALRRL. The segment covering 174-185 has biased composition (polar residues); sequence CPSTSGTQSTSE. The span at 192-202 shows a compositional bias: basic and acidic residues; sequence HAGDKNAAEKK. Positions 203-213 are enriched in basic residues; it reads KKEKKRALRRL.

The protein belongs to the ubiquitin-conjugating enzyme family.

The enzyme catalyses S-ubiquitinyl-[E1 ubiquitin-activating enzyme]-L-cysteine + [E2 ubiquitin-conjugating enzyme]-L-cysteine = [E1 ubiquitin-activating enzyme]-L-cysteine + S-ubiquitinyl-[E2 ubiquitin-conjugating enzyme]-L-cysteine.. The protein operates within protein modification; protein ubiquitination. Functionally, catalyzes the covalent attachment of ubiquitin to other proteins. Acts as an essential factor of the anaphase promoting complex/cyclosome (APC/C), a cell cycle-regulated ubiquitin ligase that controls progression through mitosis. Acts by specifically elongating polyubiquitin chains initiated by the E2 enzyme UBCH10 on APC/C substrates, enhancing the degradation of APC/C substrates by the proteasome and promoting mitotic exit. The sequence is that of Ubiquitin-conjugating enzyme E2 S from Branchiostoma floridae (Florida lancelet).